The sequence spans 330 residues: Protein RecA (330 aa).

Glycine 66–threonine 73 lines the ATP pocket.

Belongs to the RecA family.

Its subcellular location is the cytoplasm. Can catalyze the hydrolysis of ATP in the presence of single-stranded DNA, the ATP-dependent uptake of single-stranded DNA by duplex DNA, and the ATP-dependent hybridization of homologous single-stranded DNAs. It interacts with LexA causing its activation and leading to its autocatalytic cleavage. This Bacteroides thetaiotaomicron (strain ATCC 29148 / DSM 2079 / JCM 5827 / CCUG 10774 / NCTC 10582 / VPI-5482 / E50) protein is Protein RecA.